A 240-amino-acid polypeptide reads, in one-letter code: Probable transcriptional regulatory protein HPAG1_0159 (240 aa).

Belongs to the TACO1 family.

It is found in the cytoplasm. The polypeptide is Probable transcriptional regulatory protein HPAG1_0159 (Helicobacter pylori (strain HPAG1)).